The chain runs to 373 residues: MKLLSVLALSATATSVLGASIPVDTRAQKFLIELAPGETRWVTEEEKWELKQKGQDFFDITDEEVGFTAAVAQPAIAYPTSIRHADAVNAMIATLSKENMQRDLTKLSSFHNRYYKSDYGKQSATWLQQQVQAVINSSGASRYGAKVVSVRHNFVQHSIVATIPGRSPEIVVVGAHQDSINQRSPMTGRAPGADDNGSGSVTILEALRGVLQDQTIVQGKAANTIEFHWYAGEEAGLLGSQAIFANYKQTGKKVKGMLNQDMTGYIKGMVDRGLKVSFGIITDNVSTSLTSFIRMVITKYCSIPTIDTRCGYACSDHASANRNGYPSAMVAESPINLLDPHLHTDSDLISYLDFDHMIEHAKLVVGFVTELAK.

The N-terminal stretch at 1 to 18 is a signal peptide; the sequence is MKLLSVLALSATATSVLG. The N-linked (GlcNAc...) asparagine glycan is linked to N136. 2 residues coordinate Zn(2+): H176 and D195. Residue N196 is glycosylated (N-linked (GlcNAc...) asparagine). E234 and D261 together coordinate Zn(2+). An N-linked (GlcNAc...) asparagine glycan is attached at N284. The cysteines at positions 310 and 314 are disulfide-linked. Residue H343 coordinates Zn(2+).

This sequence belongs to the peptidase M28 family. M28E subfamily. As to quaternary structure, monomer. It depends on Zn(2+) as a cofactor.

The protein resides in the secreted. Functionally, extracellular aminopeptidase which contributes to pathogenicity. In Trichophyton equinum (Horse ringworm fungus), this protein is Leucine aminopeptidase 1 (LAP1).